The primary structure comprises 111 residues: Ribonuclease P protein component (111 aa).

It belongs to the RnpA family. In terms of assembly, consists of a catalytic RNA component (M1 or rnpB) and a protein subunit.

It catalyses the reaction Endonucleolytic cleavage of RNA, removing 5'-extranucleotides from tRNA precursor.. Its function is as follows. RNaseP catalyzes the removal of the 5'-leader sequence from pre-tRNA to produce the mature 5'-terminus. It can also cleave other RNA substrates such as 4.5S RNA. The protein component plays an auxiliary but essential role in vivo by binding to the 5'-leader sequence and broadening the substrate specificity of the ribozyme. The sequence is that of Ribonuclease P protein component from Alkaliphilus metalliredigens (strain QYMF).